We begin with the raw amino-acid sequence, 82 residues long: Small ribosomal subunit protein bS16 (82 aa).

The protein belongs to the bacterial ribosomal protein bS16 family.

This chain is Small ribosomal subunit protein bS16, found in Pectobacterium carotovorum subsp. carotovorum (strain PC1).